An 85-amino-acid polypeptide reads, in one-letter code: Homeobox protein knotted-1-like 7 (85 aa).

The ELK domain occupies 1 to 21 (ELKNELKQGYKEKLVDIREEI). Positions 22–85 (MRKRRAGKLP…NQRKRNWHSN (64 aa)) form a DNA-binding region, homeobox; TALE-type.

Belongs to the TALE/KNOX homeobox family. As to expression, expressed in all tissues examined. Highest expression in leaves.

It localises to the nucleus. This chain is Homeobox protein knotted-1-like 7 (KNOX7), found in Zea mays (Maize).